The following is a 439-amino-acid chain: Vacuolar zinc transporter COT1 (439 aa).

Topologically, residues 1–9 are cytoplasmic; that stretch reads MKLGSKQVK. A helical transmembrane segment spans residues 10-30; that stretch reads IISLLLLDTVFFGIEITTGYL. The Vacuolar portion of the chain corresponds to 31–33; that stretch reads SHS. Residues 34–54 traverse the membrane as a helical segment; sequence LALIADSFHMLNDIISLVVAL. Residues 55 to 76 are Cytoplasmic-facing; sequence WAVNVAKNRNPDSTYTYGWKRA. A helical membrane pass occupies residues 77 to 97; sequence EILGALINAVFLIALCVSILI. Residues 98 to 113 are Vacuolar-facing; sequence EALQRIIAPPVIENPK. A helical membrane pass occupies residues 114 to 134; that stretch reads FVLYVGVAGLISNTVGLFLFH. The Cytoplasmic portion of the chain corresponds to 135 to 244; the sequence is DNDQEHGHGH…RKRSLNMHGV (110 aa). Short sequence motifs (histidine repeat) lie at residues 140–144, 165–169, and 219–223; these read HGHGH, HTHAH, and SSHTI. The segment covering 207–230 has biased composition (polar residues); sequence PENASKTPSYSTSSHTIASGGNYT. A disordered region spans residues 207 to 231; that stretch reads PENASKTPSYSTSSHTIASGGNYTE. Phosphoserine is present on Ser225. A helical membrane pass occupies residues 245-265; sequence FLHVLGDALGNIGVMLSAFFI. The Vacuolar portion of the chain corresponds to 266–274; sequence WKTDYSWKY. The helical transmembrane segment at 275-295 threads the bilayer; the sequence is YTDPLVSLIITGIIFSSALPL. Residues 296 to 439 are Cytoplasmic-facing; that stretch reads SCKASKILLQ…CNTADCLEDH (144 aa). Lys301 participates in a covalent cross-link: Glycyl lysine isopeptide (Lys-Gly) (interchain with G-Cter in ubiquitin). Residues 388–402 show a composition bias toward basic and acidic residues; the sequence is TSTERAGDSQGDHLQ. The disordered stretch occupies residues 388–408; the sequence is TSTERAGDSQGDHLQNDPLSL.

It belongs to the cation diffusion facilitator (CDF) transporter (TC 2.A.4) family. SLC30A subfamily.

Its subcellular location is the vacuole membrane. It catalyses the reaction Zn(2+)(in) = Zn(2+)(out). In terms of biological role, vacuolar transporter that regulates zinc homeostasis by mediating zinc transport and storage into the vacuole. Plays a role in resistance to zinc shock resulting from sudden influx of zinc into cytoplasm. May also participate in the regulation of cobalt levels under normal physiological conditions and may be important in the supply of metal that is required for metalloenzyme or cofactor synthesis. Involved in the resistance to cobalt and rhodium ions. The chain is Vacuolar zinc transporter COT1 from Saccharomyces cerevisiae (strain ATCC 204508 / S288c) (Baker's yeast).